Reading from the N-terminus, the 262-residue chain is Tryptophan synthase alpha chain (262 aa).

Catalysis depends on proton acceptor residues E49 and D60.

It belongs to the TrpA family. As to quaternary structure, tetramer of two alpha and two beta chains.

The catalysed reaction is (1S,2R)-1-C-(indol-3-yl)glycerol 3-phosphate + L-serine = D-glyceraldehyde 3-phosphate + L-tryptophan + H2O. It participates in amino-acid biosynthesis; L-tryptophan biosynthesis; L-tryptophan from chorismate: step 5/5. Its function is as follows. The alpha subunit is responsible for the aldol cleavage of indoleglycerol phosphate to indole and glyceraldehyde 3-phosphate. In Caldanaerobacter subterraneus subsp. tengcongensis (strain DSM 15242 / JCM 11007 / NBRC 100824 / MB4) (Thermoanaerobacter tengcongensis), this protein is Tryptophan synthase alpha chain.